The sequence spans 173 residues: T-cell surface glycoprotein CD3 delta chain (173 aa).

The first 21 residues, Met-1–Pro-21, serve as a signal peptide directing secretion. Residues Phe-22–Ala-105 are Extracellular-facing. The cysteines at positions 37 and 73 are disulfide-linked. Asn-38, Asn-55, and Asn-74 each carry an N-linked (GlcNAc...) asparagine glycan. A helical transmembrane segment spans residues Gly-106–Ala-126. Over Gly-127–Ser-173 the chain is Cytoplasmic. The ITAM domain maps to Glu-138–Asn-166. Residues Tyr-149 and Tyr-160 each carry the phosphotyrosine modification.

The TCR-CD3 complex is composed of a CD3D/CD3E and a CD3G/CD3E heterodimers that preferentially associate with TCRalpha and TCRbeta, respectively, to form TCRalpha/CD3E/CD3G and TCRbeta/CD3G/CD3E trimers. In turn, the hexamer interacts with CD3Z homodimer to form the TCR-CD3 complex. Alternatively, TCRalpha and TCRbeta can be replaced by TCRgamma and TCRdelta. Interacts with coreceptors CD4 and CD8. Post-translationally, phosphorylated on Tyr residues after T-cell receptor triggering by LCK in association with CD4/CD8.

Its subcellular location is the membrane. Part of the TCR-CD3 complex present on T-lymphocyte cell surface that plays an essential role in adaptive immune response. When antigen presenting cells (APCs) activate T-cell receptor (TCR), TCR-mediated signals are transmitted across the cell membrane by the CD3 chains CD3D, CD3E, CD3G and CD3Z. All CD3 chains contain immunoreceptor tyrosine-based activation motifs (ITAMs) in their cytoplasmic domain. Upon TCR engagement, these motifs become phosphorylated by Src family protein tyrosine kinases LCK and FYN, resulting in the activation of downstream signaling pathways. In addition of this role of signal transduction in T-cell activation, CD3D plays an essential role in thymocyte differentiation. Indeed, participates in correct intracellular TCR-CD3 complex assembly and surface expression. In absence of a functional TCR-CD3 complex, thymocytes are unable to differentiate properly. Interacts with CD4 and CD8 and thus serves to establish a functional link between the TCR and coreceptors CD4 and CD8, which is needed for activation and positive selection of CD4 or CD8 T-cells. The polypeptide is T-cell surface glycoprotein CD3 delta chain (Cd3d) (Mus musculus (Mouse)).